Here is a 208-residue protein sequence, read N- to C-terminus: Large ribosomal subunit protein uL4 (208 aa).

The interval 51–79 (AKERAEVSFSTKKLKKQKGTGGARAGSRK) is disordered.

The protein belongs to the universal ribosomal protein uL4 family. In terms of assembly, part of the 50S ribosomal subunit.

One of the primary rRNA binding proteins, this protein initially binds near the 5'-end of the 23S rRNA. It is important during the early stages of 50S assembly. It makes multiple contacts with different domains of the 23S rRNA in the assembled 50S subunit and ribosome. Functionally, forms part of the polypeptide exit tunnel. The polypeptide is Large ribosomal subunit protein uL4 (Cytophaga hutchinsonii (strain ATCC 33406 / DSM 1761 / CIP 103989 / NBRC 15051 / NCIMB 9469 / D465)).